The sequence spans 328 residues: Biotin synthase (328 aa).

Residues 50 to 277 (FGDQVHLCCI…GKEIVICGGR (228 aa)) enclose the Radical SAM core domain. [4Fe-4S] cluster is bound by residues cysteine 67, cysteine 71, and cysteine 74. [2Fe-2S] cluster-binding residues include serine 111, cysteine 142, and cysteine 202.

This sequence belongs to the radical SAM superfamily. Biotin synthase family. As to quaternary structure, homodimer. The cofactor is [4Fe-4S] cluster. [2Fe-2S] cluster serves as cofactor.

The enzyme catalyses (4R,5S)-dethiobiotin + (sulfur carrier)-SH + 2 reduced [2Fe-2S]-[ferredoxin] + 2 S-adenosyl-L-methionine = (sulfur carrier)-H + biotin + 2 5'-deoxyadenosine + 2 L-methionine + 2 oxidized [2Fe-2S]-[ferredoxin]. It functions in the pathway cofactor biosynthesis; biotin biosynthesis; biotin from 7,8-diaminononanoate: step 2/2. Functionally, catalyzes the conversion of dethiobiotin (DTB) to biotin by the insertion of a sulfur atom into dethiobiotin via a radical-based mechanism. This chain is Biotin synthase, found in Desulfatibacillum aliphaticivorans.